Reading from the N-terminus, the 417-residue chain is Mast cell carboxypeptidase A (417 aa).

The N-terminal stretch at 1–15 is a signal peptide; sequence MRLILPVGLIATTLA. A propeptide spans 16–109 (activation peptide); that stretch reads IAPVRFDREK…IEKQFDVKED (94 aa). The Peptidase M14 domain occupies 118–412; it reads KYNNWEKIVA…LAVKFIAKYI (295 aa). Cystine bridges form between Cys-173-Cys-186 and Cys-245-Cys-268. Zn(2+)-binding residues include His-176 and Glu-179. Residue His-304 participates in Zn(2+) binding. Glu-378 serves as the catalytic Proton donor/acceptor.

It belongs to the peptidase M14 family. Zn(2+) is required as a cofactor.

The protein localises to the cytoplasmic vesicle. It is found in the secretory vesicle. It carries out the reaction Release of a C-terminal amino acid, but little or no action with -Asp, -Glu, -Arg, -Lys or -Pro.. In Homo sapiens (Human), this protein is Mast cell carboxypeptidase A (CPA3).